A 217-amino-acid chain; its full sequence is MGQKINPIGLRVGIIRDWEAKWYAEKDFASLLHEDLRIRKFIDNELKEASVSHVEIERAANRINIAIHTGKPGMVIGKGGSEIEKLRNKLNNLTDKKVHINVIEIKKIDIDARLVAENIARQLENRASFRRVQKQAISRAMKLGAKGIKTQVSGRLGGADIARAEQYSEGTVPLHTLRADIDYAHAEADTTYGKLGVKVWIYRGEVLPTKNTSEGGK.

In terms of domain architecture, KH type-2 spans 38-106 (IRKFIDNELK…KVHINVIEIK (69 aa)).

The protein belongs to the universal ribosomal protein uS3 family. As to quaternary structure, part of the 30S ribosomal subunit. Forms a tight complex with proteins S10 and S14.

Its function is as follows. Binds the lower part of the 30S subunit head. Binds mRNA in the 70S ribosome, positioning it for translation. The polypeptide is Small ribosomal subunit protein uS3 (Staphylococcus haemolyticus (strain JCSC1435)).